The primary structure comprises 282 residues: High mobility group nucleosome-binding domain-containing protein 5 (282 aa).

The disordered stretch occupies residues 1 to 282; it reads MPKRKAAGQG…GKKEEPQSIV (282 aa). Position 31 is a phosphothreonine (threonine 31). Residues 37 to 46 are compositionally biased toward basic residues; it reads KRTSSSRKMK. Lysine 67 participates in a covalent cross-link: Glycyl lysine isopeptide (Lys-Gly) (interchain with G-Cter in SUMO2). The residue at position 76 (tyrosine 76) is a Phosphotyrosine. Residues 81-119 are compositionally biased toward basic and acidic residues; that stretch reads KNGEAKITEAPASEKEIVEVKEENIEDATEKGGEKKEAV. Serine 93 carries the phosphoserine modification. Lysine 101 is covalently cross-linked (Glycyl lysine isopeptide (Lys-Gly) (interchain with G-Cter in SUMO1); alternate). A Glycyl lysine isopeptide (Lys-Gly) (interchain with G-Cter in SUMO2); alternate cross-link involves residue lysine 101. Lysine 124 is covalently cross-linked (Glycyl lysine isopeptide (Lys-Gly) (interchain with G-Cter in SUMO2)). Positions 125-138 are enriched in acidic residues; sequence NEEEDQKEDEEDQN. 2 stretches are compositionally biased toward basic and acidic residues: residues 139 to 152 and 158 to 256; these read EEKG…KDEK and KEDK…KEDL. Over residues 257 to 270 the composition is skewed to acidic residues; it reads KEEEEGKEEDEIKE. Positions 271 to 282 are enriched in basic and acidic residues; it reads DDGKKEEPQSIV.

This sequence belongs to the HMGN family. In terms of tissue distribution, ubiquitously expressed.

It localises to the nucleus. In terms of biological role, preferentially binds to euchromatin and modulates cellular transcription by counteracting linker histone-mediated chromatin compaction. The chain is High mobility group nucleosome-binding domain-containing protein 5 (HMGN5) from Homo sapiens (Human).